A 562-amino-acid chain; its full sequence is MENSMNNRGHGHNQEHADNLPESKRQKLPALASVIVEAVKVDSLQRLCSSLEPLFRRIVSEEVERAISRLENSKSTSRSTEPNKIQGLDGRNLQLRFRTRMPPHLFTGGKVEGEQGSAIHVVLIDANTGNVIQTGEESMTKLNIVVLDGDFNDEDDKDWTREHFESFEVKEREGKRPILTGDRHVIIKEGVGTLGKLTFTDNSSWIRSRKFRLGVKPATGFHIREAKTEPFAVKDHRGELYKKHYPPVLHDEVWRLDKIAKDGALHKKLLKSNIVTVEDFLQILMKDPQKLRSLLGSGMSNRMWDNTVEHAKTCVLGGKLYAYYTDQTHQTAVVFNHIYEFQGLIANGHFLSSESLNHDQKISADTLVKTAYENWHKVVEYGGKLLNCLPVAKKGIKSLPEPKMAQNHQTQQKALQCQQTVNGYSSDPQHLIEYPFVQQPCYQLRDYTSMESSSVSGSYNGGLEDIFTEEIRARSSEMLETDNMQRLLKTFGISGGFGNRDESIYGFSDQYEAQIDKGYMREGGRGAGKAVVGWLKLKAALRWGIFIRKKAAERRPQIVEID.

A disordered region spans residues 1 to 22 (MENSMNNRGHGHNQEHADNLPE). Positions 5–84 (MNNRGHGHNQ…STSRSTEPNK (80 aa)) are calmodulin-binding. The span at 12 to 22 (HNQEHADNLPE) shows a compositional bias: basic and acidic residues. The interval 154–273 (EDDKDWTREH…ALHKKLLKSN (120 aa)) is DNA-binding.

It belongs to the plant ACBP60 protein family. In terms of assembly, interacts with calmodulin (CaM).

Its subcellular location is the nucleus. Transcription activator that binds DNA in a sequence-specific manner, likely 5'-GAAATTTTGG-3', to promote the expression of target genes. The sequence is that of Calmodulin-binding protein 60 F from Arabidopsis thaliana (Mouse-ear cress).